We begin with the raw amino-acid sequence, 434 residues long: T-box transcription factor T homolog (434 aa).

Residues 50–220 (LWKKFHKLTN…YNPFAKAFLD (171 aa)) constitute a DNA-binding region (T-box). Composition is skewed to polar residues over residues 355–364 (SGFSHVSSPQ) and 376–385 (HPTSSHQHNL). The segment at 355-385 (SGFSHVSSPQSPLPTGLFRNPHPTSSHQHNL) is disordered.

As to expression, in the developing embryo, expressed in the mesenchyme founder cells, vegetal plate of the mesenchyme blastula, extending tip of the invaginating archenteron and, later, in the secondary mesenchyme cells.

It localises to the nucleus. Involved in the transcriptional regulation of genes required for mesoderm differentiation. This Hemicentrotus pulcherrimus (Sea urchin) protein is T-box transcription factor T homolog.